The following is a 175-amino-acid chain: Mitochondrial inner membrane protease subunit 2 (175 aa).

A helical membrane pass occupies residues Phe19–Ala37. Residues Ser43 and Lys91 contribute to the active site.

Belongs to the peptidase S26 family. IMP2 subfamily. Heterodimer of 2 subunits, IMMPL1 and IMMPL2.

Its subcellular location is the mitochondrion inner membrane. In terms of biological role, catalyzes the removal of transit peptides required for the targeting of proteins from the mitochondrial matrix, across the inner membrane, into the inter-membrane space. Known to process the nuclear encoded protein DIABLO. The chain is Mitochondrial inner membrane protease subunit 2 (Immp2l) from Mus musculus (Mouse).